Consider the following 288-residue polypeptide: Phytanoyl-CoA dioxygenase domain-containing protein 1 homolog (288 aa).

Residues Lys95, Met134, 149–151, and Trp167 contribute to the 2-oxoglutarate site; that span reads HVD. The Fe cation site is built by His149 and Asp151. His242 provides a ligand contact to Fe cation. Residues Ser244 and Arg253 each coordinate 2-oxoglutarate.

It belongs to the PhyH family. PHYHD1 subfamily. The cofactor is Fe cation.

In terms of biological role, has alpha-ketoglutarate-dependent dioxygenase activity. Does not show detectable activity towards fatty acid CoA thioesters. Is not expected to be active with phytanoyl CoA. The chain is Phytanoyl-CoA dioxygenase domain-containing protein 1 homolog from Caenorhabditis elegans.